The chain runs to 491 residues: UDP-N-acetylmuramate--L-alanine ligase (491 aa).

126 to 132 (GTHGKTT) serves as a coordination point for ATP.

This sequence belongs to the MurCDEF family.

It localises to the cytoplasm. It carries out the reaction UDP-N-acetyl-alpha-D-muramate + L-alanine + ATP = UDP-N-acetyl-alpha-D-muramoyl-L-alanine + ADP + phosphate + H(+). It functions in the pathway cell wall biogenesis; peptidoglycan biosynthesis. Cell wall formation. The sequence is that of UDP-N-acetylmuramate--L-alanine ligase from Salmonella typhimurium (strain LT2 / SGSC1412 / ATCC 700720).